The sequence spans 262 residues: Phosphate import ATP-binding protein PstB 2 (262 aa).

The region spanning 18–257 (FVVRNLDLFY…PSDRRTEDYI (240 aa)) is the ABC transporter domain. 50-57 (GPSGCGKS) serves as a coordination point for ATP.

It belongs to the ABC transporter superfamily. Phosphate importer (TC 3.A.1.7) family. As to quaternary structure, the complex is composed of two ATP-binding proteins (PstB), two transmembrane proteins (PstC and PstA) and a solute-binding protein (PstS).

The protein resides in the cell membrane. The catalysed reaction is phosphate(out) + ATP + H2O = ADP + 2 phosphate(in) + H(+). In terms of biological role, part of the ABC transporter complex PstSACB involved in phosphate import. Responsible for energy coupling to the transport system. This Symbiobacterium thermophilum (strain DSM 24528 / JCM 14929 / IAM 14863 / T) protein is Phosphate import ATP-binding protein PstB 2.